The sequence spans 229 residues: Ribose-5-phosphate isomerase A (229 aa).

Residues 28-31 (TGST), 85-88 (DGAD), and 98-101 (KGRG) contribute to the substrate site. Residue Glu107 is the Proton acceptor of the active site. Lys125 serves as a coordination point for substrate.

The protein belongs to the ribose 5-phosphate isomerase family. As to quaternary structure, homotetramer.

It carries out the reaction aldehydo-D-ribose 5-phosphate = D-ribulose 5-phosphate. It participates in carbohydrate degradation; pentose phosphate pathway; D-ribose 5-phosphate from D-ribulose 5-phosphate (non-oxidative stage): step 1/1. Inhibited by D-4-phosphoerythronic acid. Functionally, involved in the first step of the non-oxidative branch of the pentose phosphate pathway. It catalyzes the reversible conversion of ribose-5-phosphate to ribulose 5-phosphate. This chain is Ribose-5-phosphate isomerase A, found in Pyrococcus horikoshii (strain ATCC 700860 / DSM 12428 / JCM 9974 / NBRC 100139 / OT-3).